The primary structure comprises 430 residues: Adenylosuccinate synthetase (430 aa).

GTP contacts are provided by residues 12–18 (GDEGKGK) and 40–42 (GHT). The active-site Proton acceptor is the Asp13. Residues Asp13 and Gly40 each coordinate Mg(2+). IMP is bound by residues 13-16 (DEGK), 38-41 (NAGH), Thr130, Arg144, Gln224, Thr239, and Arg303. His41 serves as the catalytic Proton donor. 299–305 (TVTGRKR) lines the substrate pocket. Residues Arg305, 331 to 333 (KLD), and 413 to 415 (STS) contribute to the GTP site.

The protein belongs to the adenylosuccinate synthetase family. In terms of assembly, homodimer. Mg(2+) is required as a cofactor.

It is found in the cytoplasm. The catalysed reaction is IMP + L-aspartate + GTP = N(6)-(1,2-dicarboxyethyl)-AMP + GDP + phosphate + 2 H(+). It functions in the pathway purine metabolism; AMP biosynthesis via de novo pathway; AMP from IMP: step 1/2. In terms of biological role, plays an important role in the de novo pathway of purine nucleotide biosynthesis. Catalyzes the first committed step in the biosynthesis of AMP from IMP. This Cereibacter sphaeroides (strain ATCC 17029 / ATH 2.4.9) (Rhodobacter sphaeroides) protein is Adenylosuccinate synthetase.